The sequence spans 275 residues: Beta-lactamase OXA-15 (275 aa).

Residues 1–21 (MAIRIFAILFSIFSLATFAHA) form the signal peptide. Residue serine 72 is the Acyl-ester intermediate of the active site. Lysine 75 is modified (N6-carboxylysine). Residue 210–212 (KTG) participates in substrate binding.

This sequence belongs to the class-D beta-lactamase family.

The enzyme catalyses a beta-lactam + H2O = a substituted beta-amino acid. Hydrolyzes oxacillin, first-generation cephalosporins and ceftazidime. Does not hydrolyze cefotaxime or carbapenems. The sequence is that of Beta-lactamase OXA-15 (bla) from Pseudomonas aeruginosa.